The primary structure comprises 157 residues: Crossover junction endodeoxyribonuclease RuvC (157 aa).

Residues Asp7, Glu66, and Asp139 contribute to the active site. 3 residues coordinate Mg(2+): Asp7, Glu66, and Asp139.

The protein belongs to the RuvC family. As to quaternary structure, homodimer which binds Holliday junction (HJ) DNA. The HJ becomes 2-fold symmetrical on binding to RuvC with unstacked arms; it has a different conformation from HJ DNA in complex with RuvA. In the full resolvosome a probable DNA-RuvA(4)-RuvB(12)-RuvC(2) complex forms which resolves the HJ. Mg(2+) serves as cofactor.

The protein resides in the cytoplasm. The catalysed reaction is Endonucleolytic cleavage at a junction such as a reciprocal single-stranded crossover between two homologous DNA duplexes (Holliday junction).. Its function is as follows. The RuvA-RuvB-RuvC complex processes Holliday junction (HJ) DNA during genetic recombination and DNA repair. Endonuclease that resolves HJ intermediates. Cleaves cruciform DNA by making single-stranded nicks across the HJ at symmetrical positions within the homologous arms, yielding a 5'-phosphate and a 3'-hydroxyl group; requires a central core of homology in the junction. The consensus cleavage sequence is 5'-(A/T)TT(C/G)-3'. Cleavage occurs on the 3'-side of the TT dinucleotide at the point of strand exchange. HJ branch migration catalyzed by RuvA-RuvB allows RuvC to scan DNA until it finds its consensus sequence, where it cleaves and resolves the cruciform DNA. This chain is Crossover junction endodeoxyribonuclease RuvC, found in Campylobacter concisus (strain 13826).